A 744-amino-acid polypeptide reads, in one-letter code: CCR4-NOT transcription complex subunit 10 (744 aa).

A compositionally biased stretch (basic and acidic residues) spans 1 to 16 (MAADKPADQGAEKHEG). Positions 1-25 (MAADKPADQGAEKHEGTGQSSGITD) are disordered. Ala-2 carries the N-acetylalanine modification. The stretch at 74–107 (KSNQTTTDNLRQTLNQLKNQVHSAVEEMDGLDDV) forms a coiled coil. Residues 183 to 199 (NNNKNGKNETGNNNNKD) show a composition bias toward low complexity. Disordered regions lie at residues 183 to 204 (NNNKNGKNETGNNNNKDGSNHK), 477 to 521 (QDPK…PPSS), and 602 to 634 (VSLGISSNEQDQGSDKGENEAMESSGKRAPQCY). Residues 484–495 (GAKNSNQLGGNT) are compositionally biased toward polar residues. Positions 496-506 (ESSESSETCSS) are enriched in low complexity. Polar residues predominate over residues 602 to 612 (VSLGISSNEQD).

It belongs to the CNOT10 family. In terms of assembly, component of the CCR4-NOT complex; distinct complexes seem to exist that differ in the participation of probably mutually exclusive catalytic subunits. CNOT10 and CNOT11 form a subcomplex docked to the CNOT1 scaffold.

It is found in the cytoplasm. Its subcellular location is the nucleus. Component of the CCR4-NOT complex which is one of the major cellular mRNA deadenylases and is linked to various cellular processes including bulk mRNA degradation, miRNA-mediated repression, translational repression during translational initiation and general transcription regulation. Additional complex functions may be a consequence of its influence on mRNA expression. Is not required for association of CNOT7 to the CCR4-NOT complex. In Macaca fascicularis (Crab-eating macaque), this protein is CCR4-NOT transcription complex subunit 10 (CNOT10).